A 328-amino-acid chain; its full sequence is Nitrilase (328 aa).

Residues 9 to 286 enclose the CN hydrolase domain; the sequence is VRVAAIQAEP…EGILYANVDV (278 aa). Glu-49 acts as the Proton acceptor in catalysis. Lys-131 is an active-site residue. The active-site Nucleophile is the Cys-166.

Belongs to the carbon-nitrogen hydrolase superfamily. Nitrilase family.

The enzyme catalyses a nitrile + 2 H2O = a carboxylate + NH4(+). In terms of biological role, nitrilase that hydrolyzes preferentially 4-cyanopyridine. Is also able to hydrolyze some aliphatic nitriles, such as (R,S)-mandelonitrile. This chain is Nitrilase, found in Penicillium rubens (strain ATCC 28089 / DSM 1075 / NRRL 1951 / Wisconsin 54-1255) (Penicillium chrysogenum).